The sequence spans 229 residues: Platelet-activating factor acetylhydrolase IB subunit alpha2 (229 aa).

Ser-2 bears the N-acetylserine mark. Ser-2 carries the phosphoserine modification. The active site involves Ser-48. Ser-64 is modified (phosphoserine). Catalysis depends on residues Asp-193 and His-196. At Thr-220 the chain carries Phosphothreonine.

This sequence belongs to the 'GDSL' lipolytic enzyme family. Platelet-activating factor acetylhydrolase IB beta/gamma subunits subfamily. Forms a catalytic dimer which is either homodimer (alpha2/alpha2 homodimer) or heterodimer with PAFAH1B3 (alpha2/alpha1 heterodimer). Component of the cytosolic (PAF-AH (I)) heterotetrameric enzyme, which is composed of PAFAH1B1 (beta), PAFAH1B2 (alpha2) and PAFAH1B3 (alpha1) subunits. The catalytic activity of the enzyme resides in the alpha1 (PAFAH1B3) and alpha2 (PAFAH1B2) subunits, whereas the beta subunit (PAFAH1B1) has regulatory activity. Trimer formation is not essential for the catalytic activity. Interacts (homodimer form) with PAFAH1B1 (homodimer form); PAFAH1B2 competes with NDEL1 for PAFAH1B1 binding. Interacts with VLDLR; this interaction may modulate the Reelin pathway.

Its subcellular location is the cytoplasm. It carries out the reaction a 1-O-alkyl-2-acetyl-sn-glycero-3-phosphocholine + H2O = a 1-O-alkyl-sn-glycero-3-phosphocholine + acetate + H(+). It catalyses the reaction 1-O-hexadecyl-2-acetyl-sn-glycero-3-phosphocholine + H2O = 1-O-hexadecyl-sn-glycero-3-phosphocholine + acetate + H(+). The catalysed reaction is 1-O-hexadecyl-2-acetyl-sn-glycero-3-phosphate + H2O = 1-O-hexadecyl-sn-glycero-3-phosphate + acetate + H(+). The enzyme catalyses 1-O-hexadecyl-2-acetyl-sn-glycero-3-phosphoethanolamine + H2O = 1-O-hexadecyl-sn-glycero-3-phosphoethanolamine + acetate + H(+). With respect to regulation, beta subunit (PAFAH1B1) stimulates the acetylhydrolase activity of the alpha2/alpha2 catalytic homodimer. Functionally, alpha2 catalytic subunit of the cytosolic type I platelet-activating factor (PAF) acetylhydrolase (PAF-AH (I)) heterotetrameric enzyme that catalyzes the hydrolyze of the acetyl group at the sn-2 position of PAF and its analogs and modulates the action of PAF. The activity and substrate specificity of PAF-AH (I) are affected by its subunit composition. The alpha2/alpha2 homodimer (PAFAH1B2/PAFAH1B2 homodimer) hydrolyzes PAF and 1-O-alkyl-2-acetyl-sn-glycero-3-phosphorylethanolamine (AAGPE) more efficiently than 1-O-alkyl-2-acetyl-sn-glycero-3-phosphoric acid (AAGPA). In contrast, the alpha1/alpha2 heterodimer(PAFAH1B3/PAFAH1B3 heterodimer) hydrolyzes AAGPA more efficiently than PAF, but has little hydrolytic activity towards AAGPE. May play a role in male germ cell meiosis during the late pachytenestage and meiotic divisions as well as early spermiogenesis. The polypeptide is Platelet-activating factor acetylhydrolase IB subunit alpha2 (Pongo abelii (Sumatran orangutan)).